The sequence spans 238 residues: Ribonuclease PH (238 aa).

Residues R86 and 124–126 each bind phosphate; that span reads GTR.

Belongs to the RNase PH family. Homohexameric ring arranged as a trimer of dimers.

The enzyme catalyses tRNA(n+1) + phosphate = tRNA(n) + a ribonucleoside 5'-diphosphate. Functionally, phosphorolytic 3'-5' exoribonuclease that plays an important role in tRNA 3'-end maturation. Removes nucleotide residues following the 3'-CCA terminus of tRNAs; can also add nucleotides to the ends of RNA molecules by using nucleoside diphosphates as substrates, but this may not be physiologically important. Probably plays a role in initiation of 16S rRNA degradation (leading to ribosome degradation) during starvation. The polypeptide is Ribonuclease PH (Histophilus somni (strain 2336) (Haemophilus somnus)).